Reading from the N-terminus, the 149-residue chain is D-aminoacyl-tRNA deacylase (149 aa).

Positions 137-138 (GP) match the Gly-cisPro motif, important for rejection of L-amino acids motif.

The protein belongs to the DTD family. As to quaternary structure, homodimer.

Its subcellular location is the cytoplasm. It carries out the reaction glycyl-tRNA(Ala) + H2O = tRNA(Ala) + glycine + H(+). The catalysed reaction is a D-aminoacyl-tRNA + H2O = a tRNA + a D-alpha-amino acid + H(+). In terms of biological role, an aminoacyl-tRNA editing enzyme that deacylates mischarged D-aminoacyl-tRNAs. Also deacylates mischarged glycyl-tRNA(Ala), protecting cells against glycine mischarging by AlaRS. Acts via tRNA-based rather than protein-based catalysis; rejects L-amino acids rather than detecting D-amino acids in the active site. By recycling D-aminoacyl-tRNA to D-amino acids and free tRNA molecules, this enzyme counteracts the toxicity associated with the formation of D-aminoacyl-tRNA entities in vivo and helps enforce protein L-homochirality. The chain is D-aminoacyl-tRNA deacylase from Clostridium botulinum (strain ATCC 19397 / Type A).